The following is a 953-amino-acid chain: Dual serine/threonine and tyrosine protein kinase (953 aa).

Residues 665–926 form the Protein kinase domain; the sequence is PKLEREIGRG…VQSKLQDIYT (262 aa). ATP-binding positions include 671 to 679 and K694; that span reads IGRGQYGVV. D791 serves as the catalytic Proton acceptor. Positions 932 to 953 are disordered; the sequence is REAEGGGGGGAKEQQNLKSDTL.

This sequence belongs to the protein kinase superfamily. Ser/Thr protein kinase family.

It localises to the cytoplasm. It is found in the cell membrane. The protein resides in the apical cell membrane. The protein localises to the basolateral cell membrane. Its subcellular location is the cell junction. The enzyme catalyses L-seryl-[protein] + ATP = O-phospho-L-seryl-[protein] + ADP + H(+). It catalyses the reaction L-threonyl-[protein] + ATP = O-phospho-L-threonyl-[protein] + ADP + H(+). It carries out the reaction L-tyrosyl-[protein] + ATP = O-phospho-L-tyrosyl-[protein] + ADP + H(+). In terms of biological role, may act as a positive regulator of ERK phosphorylation downstream of fibroblast growth factor-receptor activation. May induce both caspase-dependent apoptosis and caspase-independent cell death. May play a role in the embryonic development. In Strongylocentrotus purpuratus (Purple sea urchin), this protein is Dual serine/threonine and tyrosine protein kinase.